Consider the following 320-residue polypeptide: tRNA U34 carboxymethyltransferase (320 aa).

Residues Lys-89, Trp-103, Lys-108, Gly-128, 150–152 (DPT), 179–180 (IE), Met-194, Tyr-198, and Arg-313 contribute to the carboxy-S-adenosyl-L-methionine site.

This sequence belongs to the class I-like SAM-binding methyltransferase superfamily. CmoB family. In terms of assembly, homotetramer.

The enzyme catalyses carboxy-S-adenosyl-L-methionine + 5-hydroxyuridine(34) in tRNA = 5-carboxymethoxyuridine(34) in tRNA + S-adenosyl-L-homocysteine + H(+). In terms of biological role, catalyzes carboxymethyl transfer from carboxy-S-adenosyl-L-methionine (Cx-SAM) to 5-hydroxyuridine (ho5U) to form 5-carboxymethoxyuridine (cmo5U) at position 34 in tRNAs. In Actinobacillus pleuropneumoniae serotype 3 (strain JL03), this protein is tRNA U34 carboxymethyltransferase.